Here is a 132-residue protein sequence, read N- to C-terminus: Transmembrane protein C1orf162 homolog (132 aa).

Residues 36 to 56 form a helical membrane-spanning segment; sequence IILAFFAGVLLTLLIVALIFL. Positions 95 to 132 are disordered; it reads TFKPPEENSNDLTRNHSSGLEPTIYSQIKVTDSDLPLP. Over residues 104–124 the composition is skewed to polar residues; sequence NDLTRNHSSGLEPTIYSQIKV. A Phosphoserine modification is found at serine 111.

It localises to the membrane. The polypeptide is Transmembrane protein C1orf162 homolog (Mus musculus (Mouse)).